The following is a 517-amino-acid chain: Ribonuclease Y (517 aa).

Residues 1–21 form a helical membrane-spanning segment; sequence MIESLIALIAAIVGLGIGYLV. Residues 207–273 form the KH domain; that stretch reads LINVINIKND…TKVIELLVED (67 aa). The region spanning 333-426 is the HD domain; sequence ALAHSLEVAH…VCAADTLSAA (94 aa).

The protein belongs to the RNase Y family.

It localises to the cell membrane. Its function is as follows. Endoribonuclease that initiates mRNA decay. The polypeptide is Ribonuclease Y (Campylobacter jejuni subsp. jejuni serotype O:6 (strain 81116 / NCTC 11828)).